The following is a 366-amino-acid chain: Putative ankyrin repeat protein RBE_0601 (366 aa).

6 ANK repeats span residues K39–E68, L94–T124, H131–Q160, V162–D186, K210–A239, and I250–K280.

This chain is Putative ankyrin repeat protein RBE_0601, found in Rickettsia bellii (strain RML369-C).